The chain runs to 342 residues: MTTITITRPDDWHVHLRDGDVLKDTVRDISRYMGRAIIMPNLIPPVIDTESALSYRERIIAQGPQGNFSPLMVIYLTDNTSAEEIHKAKASGHVYAAKLYPAGATTNSDSGVTSIDHIRPALQAMQEAGMQLLIHGEVTAHDIDIFDREKVFLETVLAPIVEQFPNLRMVLEHITTADAVEFVTNAGPNVGATITAHHLMFNRNHMLVGGIRPHFYCLPILKRNIHQDALVKAATSGNPKFFLGTDSAPHAQGRKESACGCAGSYTAHAAIELYAEVFEAADALDKLEAFSSFNGPDFYNLPRNTDTITLKKESWNVPETMAFGGDEVVPIRAGEAMLWKVI.

Zn(2+) is bound by residues H13 and H15. Substrate contacts are provided by residues 15 to 17 (HLR) and N41. K98, H135, and H173 together coordinate Zn(2+). K98 is modified (N6-carboxylysine). Substrate is bound at residue H135. Position 218 (L218) interacts with substrate. D246 provides a ligand contact to Zn(2+). D246 is an active-site residue. 2 residues coordinate substrate: H250 and A262.

It belongs to the metallo-dependent hydrolases superfamily. DHOase family. Class II DHOase subfamily. Homodimer. Requires Zn(2+) as cofactor.

The enzyme catalyses (S)-dihydroorotate + H2O = N-carbamoyl-L-aspartate + H(+). The protein operates within pyrimidine metabolism; UMP biosynthesis via de novo pathway; (S)-dihydroorotate from bicarbonate: step 3/3. Its function is as follows. Catalyzes the reversible cyclization of carbamoyl aspartate to dihydroorotate. The protein is Dihydroorotase of Photobacterium profundum (strain SS9).